Consider the following 104-residue polypeptide: MASIEFSPGIQEVPTQVRVLKSKTGNRGSAIFRFEDLKSDTQNILGMRMIDEEGELTTRNIRAKFLNGEFKALEVTYDMETEAEWDRFLRFMERFSAANQMGMA.

Belongs to the Psb28 family. In terms of assembly, part of the photosystem II complex.

The protein localises to the cellular thylakoid membrane. The sequence is that of Photosystem II reaction center Psb28 protein from Synechococcus sp. (strain JA-2-3B'a(2-13)) (Cyanobacteria bacterium Yellowstone B-Prime).